The following is a 259-amino-acid chain: Type III pantothenate kinase (259 aa).

6 to 13 (DCGNTNTL) contributes to the ATP binding site. 108–111 (GADR) provides a ligand contact to substrate. Residue Asp-110 is the Proton acceptor of the active site. Asp-130 lines the K(+) pocket. Thr-133 is a binding site for ATP. Thr-185 provides a ligand contact to substrate.

This sequence belongs to the type III pantothenate kinase family. Homodimer. The cofactor is NH4(+). It depends on K(+) as a cofactor.

The protein resides in the cytoplasm. It catalyses the reaction (R)-pantothenate + ATP = (R)-4'-phosphopantothenate + ADP + H(+). The protein operates within cofactor biosynthesis; coenzyme A biosynthesis; CoA from (R)-pantothenate: step 1/5. In terms of biological role, catalyzes the phosphorylation of pantothenate (Pan), the first step in CoA biosynthesis. The protein is Type III pantothenate kinase of Maricaulis maris (strain MCS10) (Caulobacter maris).